We begin with the raw amino-acid sequence, 295 residues long: Alpha-ketoglutarate-dependent sulfate ester dioxygenase (295 aa).

His71 is a substrate binding site. 2 residues coordinate Fe cation: His98 and Asp100. Val101 lines the substrate pocket. Position 125 (Thr125) interacts with 2-oxoglutarate. Position 252 (His252) interacts with Fe cation. 2-oxoglutarate-binding residues include Arg263 and Arg267.

This sequence belongs to the TfdA dioxygenase family. The cofactor is Fe(2+).

The enzyme catalyses a primary linear alkyl sulfate ester + 2-oxoglutarate + O2 = an aldehyde + sulfate + succinate + CO2 + H(+). The catalysed reaction is 2-ethylhexyl sulfate + 2-oxoglutarate + O2 = 2-ethylhexanal + sulfate + succinate + CO2 + H(+). It catalyses the reaction hexyl sulfate + 2-oxoglutarate + O2 = hexanal + sulfate + succinate + CO2 + H(+). It carries out the reaction pentyl sulfate + 2-oxoglutarate + O2 = pentanal + sulfate + succinate + CO2 + H(+). The enzyme catalyses heptyl sulfate + 2-oxoglutarate + O2 = heptanal + sulfate + succinate + CO2 + H(+). In terms of biological role, alpha-ketoglutarate-dependent sulfate ester dioxygenase, which oxidizes medium-chain alkyl-sulfate esters. Shows preference for 2-ethylhexyl sulfate (2-EHS) in vitro, leading to the formation of succinate and 2-ethylhexanal. Has likely a role in sulfate scavenging in vivo. Also causes the inactivation of the 2-carboxyquinoxaline Ty38c (an antitubercular compound that inhibits DprE1) via oxidative decarboxylation, using Ty38c instead of alpha-ketoglutarate as a substrate. Is thus responsible for primary resistance of M.tuberculosis to Ty38c in vitro. Overexpression of Rv3406 causes resistance to Ty38c. The polypeptide is Alpha-ketoglutarate-dependent sulfate ester dioxygenase (Mycobacterium tuberculosis (strain ATCC 25618 / H37Rv)).